A 127-amino-acid polypeptide reads, in one-letter code: MSQFTLLGFIALGGAFGACSRYLISELCVVLLGRGFPYGTLTVNVIGSLLMGILMSSLNQGLIEAGPWRPIIGLGFLGALTTFSTFSMDNVILMQHGEFIKAGLNILLNVALSITACFIGYQLMMKS.

Helical transmembrane passes span 4–24, 35–55, 71–91, and 99–119; these read FTLL…RYLI, GFPY…GILM, IIGL…MDNV, and FIKA…ACFI. The Na(+) site is built by glycine 78 and threonine 81.

This sequence belongs to the fluoride channel Fluc/FEX (TC 1.A.43) family.

The protein localises to the cell inner membrane. It catalyses the reaction fluoride(in) = fluoride(out). Na(+) is not transported, but it plays an essential structural role and its presence is essential for fluoride channel function. Fluoride-specific ion channel. Important for reducing fluoride concentration in the cell, thus reducing its toxicity. The protein is Fluoride-specific ion channel FluC of Photobacterium profundum (strain SS9).